A 61-amino-acid chain; its full sequence is Large ribosomal subunit protein eL24 (61 aa).

Residues Cys7, Cys10, Cys33, and Cys37 each contribute to the Zn(2+) site. The C4-type zinc finger occupies 7–37 (CTYCGRSIEPGTGLMYVKNDGSVLWFCSSKC).

The protein belongs to the eukaryotic ribosomal protein eL24 family. Part of the 50S ribosomal subunit. Forms a cluster with proteins L3 and L14. Requires Zn(2+) as cofactor.

In terms of biological role, binds to the 23S rRNA. In Hyperthermus butylicus (strain DSM 5456 / JCM 9403 / PLM1-5), this protein is Large ribosomal subunit protein eL24.